The sequence spans 583 residues: Torsin-1A-interacting protein 1 (583 aa).

At 1–339 (MAGERWRAEG…DESSVKIKWW (339 aa)) the chain is on the nuclear side. The disordered stretch occupies residues 23–208 (APIREGRRRL…PPLRSPRPDA (186 aa)). S60 carries the phosphoserine modification. 2 stretches are compositionally biased toward basic and acidic residues: residues 70-101 (FEPR…EVRE) and 115-132 (GPQE…RLEQ). Phosphoserine occurs at positions 134, 142, 155, and 157. Polar residues predominate over residues 166-188 (SSQPVTSQTVSKKTVRTPETSVM). Phosphoserine is present on S189. A Phosphothreonine modification is found at T222. Residues S228, S231, and S242 each carry the phosphoserine modification. Residue K309 forms a Glycyl lysine isopeptide (Lys-Gly) (interchain with G-Cter in SUMO2) linkage. A Phosphoserine modification is found at S316. Residues 340-360 (LLILVAALAMGIYWFFHTPVV) traverse the membrane as a helical segment. Positions 356-583 (HTPVVETTAV…ENALKAGSCL (228 aa)) are interaction with TOR1A. A coiled-coil region spans residues 360 to 388 (VETTAVQEFQNQMKQLQSKYQSQDEKLWK). The Perinuclear space portion of the chain corresponds to 361–583 (ETTAVQEFQN…ENALKAGSCL (223 aa)). A glycan (N-linked (GlcNAc...) asparagine) is linked at N399.

The protein belongs to the TOR1AIP family. In terms of assembly, interacts with ATP1B4. Interacts with TOR1A (ATP-bound). Interacts with TOR1B, TOR2A and TOR3A. Interacts with VIM.

The protein resides in the nucleus inner membrane. In terms of biological role, required for nuclear membrane integrity. Induces TOR1A and TOR1B ATPase activity and is required for their location on the nuclear membrane. Binds to A- and B-type lamins. Possible role in membrane attachment and assembly of the nuclear lamina. The sequence is that of Torsin-1A-interacting protein 1 (Tor1aip1) from Rattus norvegicus (Rat).